We begin with the raw amino-acid sequence, 275 residues long: NH(3)-dependent NAD(+) synthetase (275 aa).

47-54 (GISGGQDS) lines the ATP pocket. D53 is a binding site for Mg(2+). R141 is a binding site for deamido-NAD(+). T161 contacts ATP. E166 contributes to the Mg(2+) binding site. Deamido-NAD(+)-binding residues include K174 and D181. ATP is bound by residues K190 and T212. 261-262 (HK) serves as a coordination point for deamido-NAD(+).

This sequence belongs to the NAD synthetase family. Homodimer.

The catalysed reaction is deamido-NAD(+) + NH4(+) + ATP = AMP + diphosphate + NAD(+) + H(+). It participates in cofactor biosynthesis; NAD(+) biosynthesis; NAD(+) from deamido-NAD(+) (ammonia route): step 1/1. Its function is as follows. Catalyzes the ATP-dependent amidation of deamido-NAD to form NAD. Uses ammonia as a nitrogen source. This chain is NH(3)-dependent NAD(+) synthetase, found in Enterococcus faecalis (strain ATCC 700802 / V583).